Consider the following 346-residue polypeptide: Ribonucleoside-diphosphate reductase subunit beta (346 aa).

E89, E120, and H123 together coordinate Fe cation. Y129 is a catalytic residue. Residues E193, E227, and H230 each coordinate Fe cation.

It belongs to the ribonucleoside diphosphate reductase small chain family. In terms of assembly, tetramer of two alpha and two beta subunits. It depends on Fe cation as a cofactor.

The catalysed reaction is a 2'-deoxyribonucleoside 5'-diphosphate + [thioredoxin]-disulfide + H2O = a ribonucleoside 5'-diphosphate + [thioredoxin]-dithiol. Its function is as follows. Provides the precursors necessary for DNA synthesis. Catalyzes the biosynthesis of deoxyribonucleotides from the corresponding ribonucleotides. The polypeptide is Ribonucleoside-diphosphate reductase subunit beta (nrdB) (Chlamydia muridarum (strain MoPn / Nigg)).